Here is a 396-residue protein sequence, read N- to C-terminus: Proteasome-activating nucleotidase (396 aa).

Residues 16–57 adopt a coiled-coil conformation; the sequence is VTYLKRRIRQLELQVRMLEADKERLERELSRLRSEMSRLRQP. Residues 181–186 and His320 each bind ATP; that span reads GCGKTL. Residues 394-396 are docks into pockets in the proteasome alpha-ring to cause gate opening; sequence IYG.

This sequence belongs to the AAA ATPase family. Homohexamer. The hexameric complex has a two-ring architecture resembling a top hat that caps the 20S proteasome core at one or both ends. Upon ATP-binding, the C-terminus of PAN interacts with the alpha-rings of the proteasome core by binding to the intersubunit pockets.

Its subcellular location is the cytoplasm. In terms of biological role, ATPase which is responsible for recognizing, binding, unfolding and translocation of substrate proteins into the archaeal 20S proteasome core particle. Is essential for opening the gate of the 20S proteasome via an interaction with its C-terminus, thereby allowing substrate entry and access to the site of proteolysis. Thus, the C-termini of the proteasomal ATPase function like a 'key in a lock' to induce gate opening and therefore regulate proteolysis. Unfolding activity requires energy from ATP hydrolysis, whereas ATP binding alone promotes ATPase-20S proteasome association which triggers gate opening, and supports translocation of unfolded substrates. The sequence is that of Proteasome-activating nucleotidase from Pyrococcus furiosus (strain ATCC 43587 / DSM 3638 / JCM 8422 / Vc1).